Reading from the N-terminus, the 119-residue chain is Small ribosomal subunit protein bS6 (119 aa).

This sequence belongs to the bacterial ribosomal protein bS6 family.

Binds together with bS18 to 16S ribosomal RNA. The polypeptide is Small ribosomal subunit protein bS6 (Thermosipho africanus (strain TCF52B)).